A 470-amino-acid polypeptide reads, in one-letter code: MVVGDFPIETDTLVIGAGPGGYVAAIRAAQLGQKVTVVEKATLGGVCLNVGCIPSKALINAGHRYENAKHSDDMGITAENVTVDFTKVQEWKASVVNKLTGGVAGLLKGNKVDVVKGEAYFVDSNSVRVMDENSAQTYTFKNAIIATGSRPIELPNFKYSERVLNSTGALALKEIPKKLVVIGGGYIGTELGTAYANFGTELVILEGGDEILPGFEKQMSSLVTRRLKKKGNVEIHTNAMAKGVEERPDGVTVTFEVKGEEKTVDADYVLITVGRRPNTDELGLEQVGIEMTDRGIVKTDKQCRTNVPNIYAIGDIIEGPPLAHKASYEGKIAAEAIAGEPAEIDYLGIPAVVFSEPELASVGYTEAQAKEEGLDIVAAKFPFAANGRALSLNETDGFMKLITRKEDGLVIGAQIAGASASDMISELSLAIEGGMTAEDIAMTIHAHPTLGEITMEAAEVAIGSPIHIVK.

FAD-binding positions include 39 to 47 (EKATLGGVC), lysine 56, and alanine 119. Residues cysteine 47 and cysteine 52 are joined by a disulfide bond. NAD(+)-binding positions include 183–187 (GGGYI), glutamate 206, and 272–275 (TVGR). 2 residues coordinate FAD: aspartate 315 and alanine 323. Histidine 447 functions as the Proton acceptor in the catalytic mechanism.

The protein belongs to the class-I pyridine nucleotide-disulfide oxidoreductase family. In terms of assembly, homodimer. Component of two multienzyme complexes: pyruvate dehydrogenase complex and oxoglutarate dehydrogenase complex. The cofactor is FAD.

The protein resides in the cytoplasm. The enzyme catalyses N(6)-[(R)-dihydrolipoyl]-L-lysyl-[protein] + NAD(+) = N(6)-[(R)-lipoyl]-L-lysyl-[protein] + NADH + H(+). Its function is as follows. Catalyzes the oxidation of dihydrolipoamide to lipoamide. In Bacillus subtilis (strain 168), this protein is Dihydrolipoyl dehydrogenase (pdhD).